A 160-amino-acid chain; its full sequence is MPQITLVFISLSGNTLSFVKRLSLYLADNYDYHVKQINIKDLKHETFPVKEEFVAILPTYLEGGNGVDSGDVEILTTPLGEFIAAHGNAQRCLGIIGSGNKNFNHQYCLTAKQYAKRFGFPLLGDFELRGTPDDISRLAQVIMEASSRHSSNDTQTLPNS.

This sequence belongs to the NrdI family.

The polypeptide is Putative NrdI-like protein (Streptococcus pyogenes serotype M1).